A 496-amino-acid chain; its full sequence is GTPase Der (496 aa).

2 consecutive EngA-type G domains span residues 3–166 (PVVA…FDNL) and 208–381 (IKLA…RSAT). GTP-binding positions include 9–16 (GRPNVGKS), 56–60 (DTGGI), 118–121 (NKVD), 214–221 (GRPNVGKS), 261–265 (DTAGV), and 326–329 (NKWD). Residues 382–466 (TRVGTSVLTR…PIRIQFQNSD (85 aa)) enclose the KH-like domain.

The protein belongs to the TRAFAC class TrmE-Era-EngA-EngB-Septin-like GTPase superfamily. EngA (Der) GTPase family. In terms of assembly, associates with the 50S ribosomal subunit.

GTPase that plays an essential role in the late steps of ribosome biogenesis. This chain is GTPase Der, found in Vibrio vulnificus (strain CMCP6).